Reading from the N-terminus, the 389-residue chain is MSNLKNFLFTSESVSEGHPDKVSDRISDMVVDSFLSGDPFSRVACETLTTTNKVVLAGEVRGPSIKEEDLIQKVRECIKDIGYDQDGFTWREATKIESHLHAQSADIAMGVDSSSNKDEGAGDQGIMFGYACNETEELMPAPIHYSHKILRLMAEDRKSGKLKNIEPDSKSQVTFEYVDGKPTKVKSVVISSQHSADVDQAKVRELLKPYLLKSIPEKFLKDFNEEELYINPTGNFVIGGPDGDCGLTGRKIIVDTYGGAAPHGGGAFSGKDPTKVDRSAAYAARYIAKNIVASNIAEKCLIQLAYAIGVSKPLSIYVDLFDNDLEKNKFVTEKISENFDLSPRGIREMLGLNKPIYEKTAAYGHFGRVPEANGSFSWEKTDKKDVFSK.

His18 contributes to the ATP binding site. Position 20 (Asp20) interacts with Mg(2+). Glu46 lines the K(+) pocket. The L-methionine site is built by Glu59 and Gln103. The segment at Gln103 to Ser113 is flexible loop. Residues Asp168–Lys170, Asp244, Arg250–Lys251, Ala267, and Lys271 each bind ATP. Asp244 is a binding site for L-methionine. Lys275 serves as a coordination point for L-methionine.

This sequence belongs to the AdoMet synthase family. As to quaternary structure, homotetramer; dimer of dimers. Mg(2+) serves as cofactor. It depends on K(+) as a cofactor.

The protein resides in the cytoplasm. It catalyses the reaction L-methionine + ATP + H2O = S-adenosyl-L-methionine + phosphate + diphosphate. The protein operates within amino-acid biosynthesis; S-adenosyl-L-methionine biosynthesis; S-adenosyl-L-methionine from L-methionine: step 1/1. Its function is as follows. Catalyzes the formation of S-adenosylmethionine (AdoMet) from methionine and ATP. The overall synthetic reaction is composed of two sequential steps, AdoMet formation and the subsequent tripolyphosphate hydrolysis which occurs prior to release of AdoMet from the enzyme. In Pelagibacter ubique (strain HTCC1062), this protein is S-adenosylmethionine synthase.